A 1003-amino-acid polypeptide reads, in one-letter code: Pumilio homolog 4 (1003 aa).

The tract at residues 38-65 (QHRNQQSFGRERERDIDVHRSGSAPPTV) is disordered. Residues 46–57 (GRERERDIDVHR) show a composition bias toward basic and acidic residues. Ser-225 is subject to Phosphoserine. The span at 285–300 (KNSPNTMLGSTMSSPV) shows a compositional bias: polar residues. A disordered region spans residues 285-328 (KNSPNTMLGSTMSSPVPRNRTPDSHLVGRSTASGLPPIGTRVGP). Phosphothreonine is present on Thr-305. A PUM-HD domain is found at 644-984 (AEASLLEGFK…HIVARVEKLI (341 aa)). Pumilio repeat units lie at residues 664–699 (EIVGHVIEFSMDQYGSRFIQQKLETATDEEKNAIFP), 700–735 (EILPYGRTLMTDVFGNYVIQKFFEHGTTKQRKELAE), 736–771 (QVTGHVLALSLQMYGCRVIQKALEVVELEQQARMVK), 772–807 (ELDGSVMKCVHDQNGNHVIQKCIERLPQDWIQFIIS), 808–843 (SFYGKVLALSTHPYGCRVIQRVLEHIDDIETQRIIM), 845–880 (EIMDSVCTLAQDQYGNYVIQHIIQHGKPHERSEIIN), 881–916 (KLAGQIVKMSQQKFASNVVEKCLTFGGPEERQVLVN), and 917–958 (EMLG…LILS).

The protein resides in the cytoplasm. Functionally, sequence-specific RNA-binding protein that regulates translation and mRNA stability by binding the 3'-UTR of target mRNAs. Binds the APUM-binding elements (APBEs) in the 3'-UTR mRNA sequence of CLV1, PNH, WUS and FAS2. This chain is Pumilio homolog 4 (APUM4), found in Arabidopsis thaliana (Mouse-ear cress).